Consider the following 798-residue polypeptide: Shutoff protein (798 aa).

A compositionally biased stretch (basic and acidic residues) spans 1-14 (MESTADGDKARGEE). The segment at 1–123 (MESTADGDKA…SHSSDSELGC (123 aa)) is disordered. Acidic residues predominate over residues 33–49 (APEDEHPDDGEPDEPAD). Basic and acidic residues predominate over residues 68–80 (GGRDAECDGEAAR). Residues 86 to 105 (DESSAPTTPSTAVRRSSGES) show a composition bias toward polar residues. A binding to host EIF4G region spans residues 309–376 (LMEVLLQPFA…GRPLYRSARA (68 aa)). Residues 379 to 497 (SVFREPSSIK…AIYALETPTE (119 aa)) form the RRM domain. Position 711 is a phosphotyrosine; by host (Tyr-711). The segment at 740 to 798 (YADHARGAATSAEPSRALRPTSVATAAGNRTRGCSSARYRLGPTLRRRSNSSWPREWST) is disordered. Residues 789 to 798 (NSSWPREWST) are compositionally biased toward polar residues.

Belongs to the adenoviridae shutoff protein family. Monomer. Interacts with hexon protein; this interaction allows chaperoning and trimerization of hexon proteins. Interacts (via N-terminus) with host initiation factor EIF4G (via C-terminus). Interacts (via RRM domain) with viral mRNAs that contain the tripartite leader; this interaction allows ribosome shunting and expression of viral late mRNAs. In terms of processing, might be cleaved by the viral protease. Phosphorylated. Tyrosine phosphorylation enhances preferential binding to tripartite leader mRNAs and allows ribosome shunting. Post-translationally, methylated. Asymmetric dimethylation by host PRMT1 of the Arg/Gly-rich region may regulate shutoff protein binding to hexon and promote the capsid assembly in the nucleus.

The protein localises to the host cytoplasm. Its function is as follows. Protein that inhibits host translation while promoting late viral translation by ribosome shunting. Blocks host cap-dependent translation by binding to eIF4G, displacing MKNK1 from cap initiation complexes and preventing EIF4E phosphorylation. Binds to the tripartite leader sequence of viral late mRNAs and recruits host eIF4G, PABPC1/poly-A binding protein and 40S ribosomes subunits on viral mRNAs, allowing ribosome shunting and efficient translation of late viral mRNAs even though conventional translation via ribosome scanning from the cap has been shut off in the host cell. During assembly, acts as a chaperone protein that helps hexon proteins assembly into trimers. In Galliformes (FAdV-10), this protein is Shutoff protein.